A 189-amino-acid chain; its full sequence is Stathmin-4 (189 aa).

S-palmitoyl cysteine attachment occurs at residues Cys20 and Cys22. The region spanning 48-189 (SDMEVIELNK…NKELKEEASR (142 aa)) is the SLD domain. Ser90 is subject to Phosphoserine. The stretch at 90 to 188 (SLEEIQKKLE…KNKELKEEAS (99 aa)) forms a coiled coil. The segment at 168–189 (QEKDKHAEEVRKNKELKEEASR) is disordered.

The protein belongs to the stathmin family.

The protein localises to the golgi apparatus. The protein resides in the cell projection. It localises to the growth cone. It is found in the axon. Functionally, exhibits microtubule-destabilizing activity. The protein is Stathmin-4 (STMN4) of Homo sapiens (Human).